The chain runs to 411 residues: Phosphoglycerate kinase (411 aa).

Substrate is bound by residues 28–30 (DIN), Arg-45, 68–71 (HQSR), Arg-125, and Arg-165. ATP contacts are provided by residues Glu-338 and 364-367 (GGHL).

The protein belongs to the phosphoglycerate kinase family. In terms of assembly, homodimer.

It localises to the cytoplasm. The catalysed reaction is (2R)-3-phosphoglycerate + ATP = (2R)-3-phospho-glyceroyl phosphate + ADP. The protein operates within carbohydrate degradation; glycolysis; pyruvate from D-glyceraldehyde 3-phosphate: step 2/5. The chain is Phosphoglycerate kinase (pgk) from Methanothermobacter thermautotrophicus (strain ATCC 29096 / DSM 1053 / JCM 10044 / NBRC 100330 / Delta H) (Methanobacterium thermoautotrophicum).